The following is a 201-amino-acid chain: Type III effector protein HopBF1 (201 aa).

ATP is bound by residues Ser39, Gln40, Lys41, Asp106, Ile108, and Asp113. The active site involves Asp154. Position 156 (Gln156) interacts with ATP.

The protein belongs to the HopBF1 family.

It is found in the secreted. Its subcellular location is the host cell. The catalysed reaction is L-seryl-[protein] + ATP = O-phospho-L-seryl-[protein] + ADP + H(+). Effector protein that targets and inactivates the plant molecular chaperone HSP90 during infection. HopBF1 is recognized by HSP90 as a host client. As a result, HopBF1 phosphorylates HSP90, leading to the inactivation of the HSP90 ATPase activity and chaperone function. Phosphorylation of HSP90 prevents activation of immune receptors that trigger the hypersensitive response in plants. HopBF1 is sufficient to cause severe disease symptoms in plants infected with P.syringae. In vitro, can phosphorylate the recombinant yeast HSP82 (HSP90) on Ser-99, Triticum aestivum (wheat) HSP90 and human HSP 90-beta, but not the prokaryotic HSP90 orthologs, HtpG from E.coli and P.syringae. Does not act on generic protein kinase substrates such as casein and myelin basic protein, as well as the yeast HSP70s and Bip chaperones. The chain is Type III effector protein HopBF1 from Pseudomonas syringae pv. syringae (strain FF5).